A 3130-amino-acid polypeptide reads, in one-letter code: DNA polymerase zeta catalytic subunit (3130 aa).

Disordered stretches follow at residues 263-295 (AIWE…VPAT), 425-457 (GYRG…NEPQ), 487-510 (LCRN…MEWS), 524-548 (LDGT…SSVI), 697-728 (PNEN…EKGN), and 817-871 (VTYK…EKDN). Residues 286–295 (SQDHRFVPAT) show a composition bias toward basic and acidic residues. Over residues 497-509 (EDDDSSSGEEMEW) the composition is skewed to acidic residues. Polar residues-rich tracts occupy residues 533-548 (DNPL…SSVI) and 699-728 (ENTL…EKGN). Positions 828–838 (SRLKLNKRKLA) are enriched in basic residues. The span at 842-854 (ETSTKSSETGSTK) shows a compositional bias: low complexity. The segment covering 855-866 (DNFIQNNPCNSN) has biased composition (polar residues). Residue Ser1030 is modified to Phosphoserine. 3 disordered regions span residues 1035–1095 (YPIY…YNAE), 1162–1231 (SRIG…DEKI), and 1537–1600 (RQQK…KLLK). Residue Thr1041 is modified to Phosphothreonine. 2 stretches are compositionally biased toward basic residues: residues 1043-1061 (KKSH…KTGK) and 1166-1179 (KTSR…KSKA). Basic and acidic residues predominate over residues 1213–1231 (KTNEKGTSRKHTTLKDEKI). Residues 1540–1565 (KAQNANTTQDPLSNKHQPNKNISGSL) show a composition bias toward polar residues. Over residues 1570-1589 (ANKRTRSVTSPRKPRTPRST) the composition is skewed to basic residues. Residues 1590 to 1600 (KQKEKIPKLLK) show a composition bias toward basic and acidic residues. Ser1724 is subject to Phosphoserine. Disordered regions lie at residues 1845–1882 (NDML…KPLM), 1962–1984 (NPRP…SNSP), 2017–2050 (ERSK…PVVP), 2080–2150 (PTTG…SPVE), and 2216–2236 (APGL…NKKG). The mediates interaction with MAD2L2 stretch occupies residues 1847–1898 (MLTPTPDSSPRSTSSPSQSKNGSFTPRTANILKPLMSPPSREEIMATLLDHD). Residues 1849–1865 (TPTPDSSPRSTSSPSQS) show a composition bias toward low complexity. Position 1967 is a phosphoserine (Ser1967). Residues 2080–2092 (PTTGCSQTASESQ) show a composition bias toward polar residues. Low complexity predominate over residues 2113–2122 (YYISYSSPDS). Residues 2221–2236 (PLSTEPKTQKLSNKKG) show a composition bias toward polar residues. Zn(2+) is bound by residues Cys3042, Cys3045, Cys3054, and Cys3057. The CysA-type zinc finger occupies 3042-3057 (CPVCDDLTQHGICSKC). The [4Fe-4S] cluster site is built by Cys3086, Cys3089, Cys3099, and Cys3104. The CysB motif signature appears at 3086 to 3104 (CKNCTGCFDRHIPCVSLNC).

This sequence belongs to the DNA polymerase type-B family. Heterodimer with MAD2L2. This dimer forms the minimal DNA polymerase zeta complex (Pol-zeta2), with REV3L bearing DNA polymerase catalytic activity, although its activity is very low in this context. Component of the tetrameric Pol-zeta complex (Pol-zeta4), which consists of REV3L, MAD2L2, POLD2 and POLD3; Pol-zeta4 is the fully active form of DNA polymerase zeta. It depends on [4Fe-4S] cluster as a cofactor. In terms of tissue distribution, ubiquitously expressed.

The protein localises to the nucleus. It catalyses the reaction DNA(n) + a 2'-deoxyribonucleoside 5'-triphosphate = DNA(n+1) + diphosphate. Catalytic subunit of the DNA polymerase zeta complex, an error-prone polymerase specialized in translesion DNA synthesis (TLS). Lacks an intrinsic 3'-5' exonuclease activity and thus has no proofreading function. The chain is DNA polymerase zeta catalytic subunit (REV3L) from Homo sapiens (Human).